The following is a 200-amino-acid chain: Holliday junction branch migration complex subunit RuvA (200 aa).

The tract at residues 1–63 (MIASVRGEVL…EDSMTLYGFP (63 aa)) is domain I. Positions 64–142 (DSESKELFGL…AVGSTSGAVP (79 aa)) are domain II. Residues 142-146 (PLGAG) form a flexible linker region. Positions 147–200 (GGGSVRDQIVEALVGLGFPAKQAEQATDSVLAEAPESTTSSALRSALSLLGKTR) are domain III.

This sequence belongs to the RuvA family. In terms of assembly, homotetramer. Forms an RuvA(8)-RuvB(12)-Holliday junction (HJ) complex. HJ DNA is sandwiched between 2 RuvA tetramers; dsDNA enters through RuvA and exits via RuvB. An RuvB hexamer assembles on each DNA strand where it exits the tetramer. Each RuvB hexamer is contacted by two RuvA subunits (via domain III) on 2 adjacent RuvB subunits; this complex drives branch migration. In the full resolvosome a probable DNA-RuvA(4)-RuvB(12)-RuvC(2) complex forms which resolves the HJ.

Its subcellular location is the cytoplasm. In terms of biological role, the RuvA-RuvB-RuvC complex processes Holliday junction (HJ) DNA during genetic recombination and DNA repair, while the RuvA-RuvB complex plays an important role in the rescue of blocked DNA replication forks via replication fork reversal (RFR). RuvA specifically binds to HJ cruciform DNA, conferring on it an open structure. The RuvB hexamer acts as an ATP-dependent pump, pulling dsDNA into and through the RuvAB complex. HJ branch migration allows RuvC to scan DNA until it finds its consensus sequence, where it cleaves and resolves the cruciform DNA. The polypeptide is Holliday junction branch migration complex subunit RuvA (Rhodococcus opacus (strain B4)).